The sequence spans 461 residues: ATP synthase subunit beta 2 (461 aa).

151–158 is a binding site for ATP; the sequence is GGAGVGKT.

This sequence belongs to the ATPase alpha/beta chains family. In terms of assembly, F-type ATPases have 2 components, CF(1) - the catalytic core - and CF(0) - the membrane proton channel. CF(1) has five subunits: alpha(3), beta(3), gamma(1), delta(1), epsilon(1). CF(0) has three main subunits: a(1), b(2) and c(9-12). The alpha and beta chains form an alternating ring which encloses part of the gamma chain. CF(1) is attached to CF(0) by a central stalk formed by the gamma and epsilon chains, while a peripheral stalk is formed by the delta and b chains.

It is found in the cell inner membrane. It catalyses the reaction ATP + H2O + 4 H(+)(in) = ADP + phosphate + 5 H(+)(out). Functionally, produces ATP from ADP in the presence of a proton gradient across the membrane. The catalytic sites are hosted primarily by the beta subunits. The sequence is that of ATP synthase subunit beta 2 from Vibrio campbellii (strain ATCC BAA-1116).